We begin with the raw amino-acid sequence, 407 residues long: Transcriptional regulator alnR (407 aa).

The segment at residues 23-53 (SCDTCQEAKVKCSQHKPSCHRCLRHRQPCVY) is a DNA-binding region (zn(2)-C6 fungal-type). Positions 53 to 85 (YSPQRRSGRPPKRPSPSSRLGPESNNSGDDIHN) are disordered. A compositionally biased stretch (polar residues) spans 75–85 (ESNNSGDDIHN).

It is found in the nucleus. Functionally, transcriptional regulator involved in the positive regulation of the expression of the gene cluster that mediates the biosynthesis of asperlin, a polyketide showing anti-inflammatory, antitumor and antibiotic activities. The sequence is that of Transcriptional regulator alnR from Emericella nidulans (strain FGSC A4 / ATCC 38163 / CBS 112.46 / NRRL 194 / M139) (Aspergillus nidulans).